The sequence spans 390 residues: Chorismate synthase (390 aa).

2 residues coordinate NADP(+): Arg39 and Arg45. Residues 132-134 (RSS), 253-254 (NA), Gly298, 313-317 (KPIPT), and Arg339 each bind FMN.

This sequence belongs to the chorismate synthase family. Homotetramer. It depends on FMNH2 as a cofactor.

The catalysed reaction is 5-O-(1-carboxyvinyl)-3-phosphoshikimate = chorismate + phosphate. It participates in metabolic intermediate biosynthesis; chorismate biosynthesis; chorismate from D-erythrose 4-phosphate and phosphoenolpyruvate: step 7/7. Its function is as follows. Catalyzes the anti-1,4-elimination of the C-3 phosphate and the C-6 proR hydrogen from 5-enolpyruvylshikimate-3-phosphate (EPSP) to yield chorismate, which is the branch point compound that serves as the starting substrate for the three terminal pathways of aromatic amino acid biosynthesis. This reaction introduces a second double bond into the aromatic ring system. This is Chorismate synthase from Bacillus pumilus (strain SAFR-032).